Here is a 960-residue protein sequence, read N- to C-terminus: FYVE, RhoGEF and PH domain-containing protein 1 (960 aa).

Disordered stretches follow at residues 1–210 (MHGH…SSAA) and 226–355 (ASDR…REIP). Serine 48 is subject to Phosphoserine. Over residues 125–135 (PHPEGPQRLRS) the composition is skewed to basic and acidic residues. Pro residues-rich tracts occupy residues 137 to 149 (PGPPTEIPGPRPS), 156 to 165 (GPKPQVPPKP), and 173 to 190 (VLPPPEPIPPPPSRPLPA). Positions 171 to 187 (PRVLPPPEPIPPPPSRP) match the SH3-binding motif. Serine 205 is subject to Phosphoserine. Pro residues predominate over residues 231 to 251 (APGPCPVPPEPAMLPQPPPQP). Basic and acidic residues predominate over residues 273–284 (RDGEKVPNRDSG). Residues 285–294 (IDSISSPSNS) are compositionally biased toward low complexity. Positions 335–350 (VDSDLEEEEEEEEEEK) are enriched in acidic residues. Positions 372 to 560 (KVFHIANELL…ATAAEHSNAA (189 aa)) constitute a DH domain. Residues 589–688 (ELIKEGHILK…WVQAINSTLL (100 aa)) enclose the PH 1 domain. The tract at residues 701–725 (NSTNRDDEDTPPNSPNVDLGKRAPT) is disordered. Threonine 710 carries the post-translational modification Phosphothreonine. Serine 714 carries the post-translational modification Phosphoserine. Residues 729–789 (EKEVTMCMRC…VCTDCYVALH (61 aa)) form an FYVE-type zinc finger. Residues cysteine 735, cysteine 738, cysteine 752, cysteine 755, cysteine 760, cysteine 763, cysteine 781, and cysteine 784 each coordinate Zn(2+). Residues 820–920 (NSVICSFLHY…WMAVLGRAGR (101 aa)) enclose the PH 2 domain. A disordered region spans residues 922–960 (DTFCPGPTLSEDKEMEETPVAASGATAEPPEASQTRDKT).

As to quaternary structure, interacts with DBNL/ABP1 and CTTN. Binds CDC42. May interact with CCPG1.

Its subcellular location is the cytoplasm. The protein resides in the cell projection. It is found in the lamellipodium. It localises to the ruffle. The protein localises to the cytoskeleton. Functionally, activates CDC42, a member of the Ras-like family of Rho- and Rac proteins, by exchanging bound GDP for free GTP. Plays a role in regulating the actin cytoskeleton and cell shape. The polypeptide is FYVE, RhoGEF and PH domain-containing protein 1 (Fgd1) (Mus musculus (Mouse)).